A 227-amino-acid chain; its full sequence is Cytidylate kinase (227 aa).

12-20 (GPSGAGKGT) lines the ATP pocket.

The protein belongs to the cytidylate kinase family. Type 1 subfamily.

Its subcellular location is the cytoplasm. It carries out the reaction CMP + ATP = CDP + ADP. The enzyme catalyses dCMP + ATP = dCDP + ADP. The sequence is that of Cytidylate kinase from Sodalis glossinidius (strain morsitans).